The chain runs to 404 residues: uncharacterized protein (404 aa).

The next 8 helical transmembrane spans lie at 1–21 (MNVL…FLFS), 32–52 (VIVG…WEAG), 89–109 (AFAL…AVLY), 182–202 (LFGY…SFMA), 261–281 (LAFV…FGLF), 285–305 (GVTL…LIGV), 344–364 (ATII…AIML), and 384–404 (KAVL…GMFI).

This sequence belongs to the concentrative nucleoside transporter (CNT) (TC 2.A.41) family.

The protein resides in the cell membrane. This is an uncharacterized protein from Bacillus subtilis (strain 168).